The following is a 215-amino-acid chain: Nascent polypeptide-associated complex subunit alpha (215 aa).

Positions 1–82 are disordered; that stretch reads MPGEATETVP…EKKARKAMSK (82 aa). Residues 9 to 28 are compositionally biased toward polar residues; that stretch reads VPVTEQEMQQPQAETGSGTE. A compositionally biased stretch (acidic residues) spans 29 to 42; the sequence is SDSDESVPDLEEGD. The span at 44-57 shows a compositional bias: low complexity; sequence AQTQTQQAQLAAAA. The NAC-A/B domain occupies 70–135; sequence SRSEKKARKA…AKIEDLSQQA (66 aa). A Phosphoserine modification is found at Ser-166. Residues 176–213 enclose the UBA domain; the sequence is VEVKDIELVMSQANVSRAKAVRALKNNNNDIVNAIMEL.

This sequence belongs to the NAC-alpha family.

In terms of biological role, may promote appropriate targeting of ribosome-nascent polypeptide complexes. In Danio rerio (Zebrafish), this protein is Nascent polypeptide-associated complex subunit alpha (naca).